Consider the following 305-residue polypeptide: NADH-cytochrome b5 reductase 1 (305 aa).

Residues Val8–Tyr28 form a helical membrane-spanning segment. The region spanning Asp44–Ala156 is the FAD-binding FR-type domain. FAD is bound by residues Asp136–Asn166 and Val175–Leu210.

It belongs to the flavoprotein pyridine nucleotide cytochrome reductase family. Requires FAD as cofactor.

Its subcellular location is the membrane. The enzyme catalyses 2 Fe(III)-[cytochrome b5] + NADH = 2 Fe(II)-[cytochrome b5] + NAD(+) + H(+). Its function is as follows. NADH-cytochrome b5 reductases are involved in desaturation and elongation of fatty acids, cholesterol biosynthesis, drug metabolism, and, in erythrocyte, methemoglobin reduction. This chain is NADH-cytochrome b5 reductase 1 (Cyb5r1), found in Rattus norvegicus (Rat).